The chain runs to 431 residues: 5-methylthioadenosine/S-adenosylhomocysteine deaminase (431 aa).

Zn(2+) contacts are provided by H66 and H68. Positions 95, 147, and 185 each coordinate substrate. H212 provides a ligand contact to Zn(2+). E215 and D300 together coordinate substrate. D300 provides a ligand contact to Zn(2+).

This sequence belongs to the metallo-dependent hydrolases superfamily. MTA/SAH deaminase family. Zn(2+) is required as a cofactor.

The catalysed reaction is S-adenosyl-L-homocysteine + H2O + H(+) = S-inosyl-L-homocysteine + NH4(+). It carries out the reaction S-methyl-5'-thioadenosine + H2O + H(+) = S-methyl-5'-thioinosine + NH4(+). Functionally, catalyzes the deamination of 5-methylthioadenosine and S-adenosyl-L-homocysteine into 5-methylthioinosine and S-inosyl-L-homocysteine, respectively. Is also able to deaminate adenosine. This chain is 5-methylthioadenosine/S-adenosylhomocysteine deaminase, found in Desulfitobacterium hafniense (strain DSM 10664 / DCB-2).